Consider the following 157-residue polypeptide: Lipoprotein signal peptidase (157 aa).

A run of 4 helical transmembrane segments spans residues 10–30 (LVFI…KHAI), 36–56 (YESL…FSLL), 58–78 (FLEG…FIFL), and 84–104 (LFKN…SNVL). Active-site residues include aspartate 114 and aspartate 131. Residues 122-142 (FDFAIFNFADVMIDVGVGVLL) traverse the membrane as a helical segment.

Belongs to the peptidase A8 family.

It localises to the cell inner membrane. It carries out the reaction Release of signal peptides from bacterial membrane prolipoproteins. Hydrolyzes -Xaa-Yaa-Zaa-|-(S,diacylglyceryl)Cys-, in which Xaa is hydrophobic (preferably Leu), and Yaa (Ala or Ser) and Zaa (Gly or Ala) have small, neutral side chains.. Its pathway is protein modification; lipoprotein biosynthesis (signal peptide cleavage). Its function is as follows. This protein specifically catalyzes the removal of signal peptides from prolipoproteins. This chain is Lipoprotein signal peptidase, found in Helicobacter pylori (strain P12).